Consider the following 274-residue polypeptide: Sulfur carrier protein FdhD (274 aa).

Cysteine 121 functions as the Cysteine persulfide intermediate in the catalytic mechanism. 258 to 263 (FSKPGR) contacts Mo-bis(molybdopterin guanine dinucleotide).

It belongs to the FdhD family.

The protein localises to the cytoplasm. Its function is as follows. Required for formate dehydrogenase (FDH) activity. Acts as a sulfur carrier protein that transfers sulfur from IscS to the molybdenum cofactor prior to its insertion into FDH. This Yersinia pseudotuberculosis serotype O:1b (strain IP 31758) protein is Sulfur carrier protein FdhD.